The primary structure comprises 145 residues: Mini-ribonuclease 3 (145 aa).

Asp27 is an active-site residue.

This sequence belongs to the MrnC RNase family. Homodimer. The cofactor is Mg(2+).

Its subcellular location is the cytoplasm. Functionally, involved in correct processing of both the 5' and 3' ends of 23S rRNA precursor. Processes 30S rRNA precursor transcript even in absence of ribonuclease 3 (Rnc); Rnc processes 30S rRNA into smaller rRNA precursors. This Kosmotoga olearia (strain ATCC BAA-1733 / DSM 21960 / TBF 19.5.1) protein is Mini-ribonuclease 3.